A 270-amino-acid chain; its full sequence is MTALMTLNGVRIEYQDIGTSSAGKPALVLLTGWGHDLRYYRRLIPHLAPEFRVVALSWRGHDADRTLVGDYGVHEQTADTIALLDAIGVDVFVPVAHAHGGWVALQLADELGVQRVPRVLIADLIMTTIPSDFAAAVRDLQKPDRWKSARAGLAKSWLSGGVTLPLLKHLLIESRGFGFDTWARSGRVIEDAYNRWGSPMGRMEQLNEPRPIRHVFSHPKTSSYDELHVAFRGRHPWFSHRRLAGRTHFPAHELPREIATEIRAFVNEST.

Residues Pro25–Ser156 form the AB hydrolase-1 domain. His99 lines the substrate pocket. The active-site Proton donor/acceptor is His248.

It belongs to the AB hydrolase superfamily.

It catalyses the reaction 2-heptyl-3-hydroxy-4(1H)-quinolone + O2 = N-octanoylanthranilate + CO + H(+). Functionally, involved in the degradation of the Pseudomonas aeruginosa quorum sensing signal molecules HHQ (2-heptyl-4-quinolone) and PQS (2-heptyl-3-hydroxy-4-quinolone) to anthranilic acid. Catalyzes the cleavage of PQS to form N-octanoylanthranilic acid and carbon monoxide. This Rhodococcus erythropolis (Arthrobacter picolinophilus) protein is 2-heptyl-3-hydroxy-4-quinolone dioxygenase AqdC2.